A 1243-amino-acid polypeptide reads, in one-letter code: Probable phospholipid-transporting ATPase 7 (1243 aa).

The Cytoplasmic segment spans residues M1–L74. The helical transmembrane segment at P75 to L96 threads the bilayer. Residues S97–P100 are Extracellular-facing. Residues L101–K123 traverse the membrane as a helical segment. Residues E124–I305 are Cytoplasmic-facing. Residues I306 to M327 form a helical membrane-spanning segment. The Extracellular segment spans residues T328–H359. The helical transmembrane segment at L360–V377 threads the bilayer. At S378 to A941 the chain is on the cytoplasmic side. Residue D425 is the 4-aspartylphosphate intermediate of the active site. K623 is covalently cross-linked (Glycyl lysine isopeptide (Lys-Gly) (interchain with G-Cter in ubiquitin)). Positions 886 and 890 each coordinate Mg(2+). The chain crosses the membrane as a helical span at residues Q942–F961. At E962–D975 the chain is on the extracellular side. Residues S976–V995 form a helical membrane-spanning segment. Over F996–R1025 the chain is Cytoplasmic. Residues I1026–F1048 traverse the membrane as a helical segment. The Extracellular portion of the chain corresponds to H1049 to D1061. A helical membrane pass occupies residues M1062–T1084. Topologically, residues M1085–W1090 are cytoplasmic. The helical transmembrane segment at I1091 to G1111 threads the bilayer. Residues M1112–T1128 are Extracellular-facing. A helical transmembrane segment spans residues L1129–Y1153. The Cytoplasmic portion of the chain corresponds to I1154–S1243.

The protein belongs to the cation transport ATPase (P-type) (TC 3.A.3) family. Type IV subfamily.

It is found in the cell membrane. It localises to the endomembrane system. It catalyses the reaction ATP + H2O + phospholipidSide 1 = ADP + phosphate + phospholipidSide 2.. Involved in transport of phospholipids and in regulation of pollen plasma membrane lipid asymmetry. In Arabidopsis thaliana (Mouse-ear cress), this protein is Probable phospholipid-transporting ATPase 7.